We begin with the raw amino-acid sequence, 124 residues long: Iron-sulfur cluster insertion protein ErpA (124 aa).

Iron-sulfur cluster contacts are provided by Cys-52, Cys-116, and Cys-118.

This sequence belongs to the HesB/IscA family. In terms of assembly, homodimer. Iron-sulfur cluster serves as cofactor.

Functionally, required for insertion of 4Fe-4S clusters for at least IspG. This is Iron-sulfur cluster insertion protein ErpA from Acidithiobacillus ferrooxidans (strain ATCC 23270 / DSM 14882 / CIP 104768 / NCIMB 8455) (Ferrobacillus ferrooxidans (strain ATCC 23270)).